The primary structure comprises 472 residues: uncharacterized protein (472 aa).

14 consecutive transmembrane segments (helical) span residues 14–34 (VIVG…TLLI), 53–73 (WLTT…AFLI), 80–100 (ALLI…AFAP), 113–133 (AAGA…IFPI), 142–162 (MVGL…GWAV), 169–189 (SLFY…SILM), 202–222 (ILSV…FSSV), 227–247 (WSSS…LLFI), 263–283 (FTFG…ALLI), 302–322 (FDTG…SPII), 333–353 (GLAI…MQLT), 359–379 (AWIV…MMPV), 405–427 (VGGS…HAGT), and 437–457 (GMNA…LLSF).

Belongs to the major facilitator superfamily. EmrB family.

The protein resides in the cell membrane. This is an uncharacterized protein from Bacillus subtilis (strain 168).